The chain runs to 242 residues: Pyr4-family terpene cyclase mfmH (242 aa).

Helical transmembrane passes span 25 to 45 (VQDGLIICSGLCWTTAYILYI), 55 to 75 (GMPLVCLCANIAWEFLFGAAI), 80 to 100 (AQVVSFFPWFVIDIGIVYTTW), and 116 to 136 (NLGWILLGGIAGMLVMFWAFL). N-linked (GlcNAc...) asparagine glycosylation occurs at asparagine 170. Helical transmembrane passes span 175 to 195 (SWGIWFTRWIGSVFAELIFVW) and 211 to 231 (VTIFLFIVTEVADLTYPFVYA).

The protein belongs to the paxB family.

It is found in the membrane. It functions in the pathway secondary metabolite biosynthesis; terpenoid biosynthesis. Functionally, terpene cyclase; part of the gene cluster that mediates the biosynthesis of the phthalide-terpenoid hybrid 11'-O-desmethylfendlerol. Within the pathway, mfmH catalyzes the last step and cyclizes the prenyl unit of 5-O-farnesylcyclopolic acid into a drimane-like structure to yield 11'-O-desmethylfendlerol. The biosynthesis of 11'-O-desmethylfendlerol begins with the NR-PKS mfmB that forms 3,5-dimethylorsellinic acid (DMOA), which is then transformed into the phthalide 5,7-dihydroxy-4-(hydroxymethyl)-6-methylphthalide by the cytochrome P450 monooxygenase mfmA and the hydrolase mfmC. Subsequently, the methyltransferase mfmE catalyzes 7-O-methylation to yield 5-hydroxy-4-(hydroxymethyl)-7-methoxy-6-methylphthalide, which undergoes C-3 hydroxylation by the cytochrome P450 monooxygenase mfmF. The resultant cyclopolic acid (2,5-dihydroxy-4-(hydroxymethyl)-7-methoxy-6-methylphthalide) is then farnesylated by the DMATS-type prenyltransferase mfmD to afford 5-O-farnesylcyclopolic acid. Finally, the Pyr4-family terpene cyclase mfmH cyclizes the farnesyl moiety of 5-O-farnesylcyclopolic acid into a drimane-like structure, thus completing the biosynthesis of 11'-O-desmethylfendlerol. The protein is Pyr4-family terpene cyclase mfmH of Annulohypoxylon moriforme (Filamentous fungus).